The sequence spans 263 residues: Proliferating cell nuclear antigen (263 aa).

The DNA-binding element occupies 61–80; sequence RCDRTINLGLSLANMSKALK.

Belongs to the PCNA family. As to quaternary structure, homotrimer. Forms a complex with activator 1 heteropentamer in the presence of ATP.

It localises to the nucleus. This protein is an auxiliary protein of DNA polymerase delta and is involved in the control of eukaryotic DNA replication by increasing the polymerase's processibility during elongation of the leading strand. In Caenorhabditis elegans, this protein is Proliferating cell nuclear antigen (pcn-1).